The sequence spans 325 residues: Urease accessory protein UreD (325 aa).

It belongs to the UreD family. As to quaternary structure, ureD, UreF and UreG form a complex that acts as a GTP-hydrolysis-dependent molecular chaperone, activating the urease apoprotein by helping to assemble the nickel containing metallocenter of UreC. The UreE protein probably delivers the nickel.

Its subcellular location is the cytoplasm. Required for maturation of urease via the functional incorporation of the urease nickel metallocenter. In terms of biological role, expression of the urease operon increases the likelihood of bacterial survival by contributing to acid resistance in vitro and in vivo in BALB/c mice. Y.enterocolitica enters the body via an oral path and must survive the acidic stomach before being able to colonize the intestinal mucosa. The polypeptide is Urease accessory protein UreD (Yersinia enterocolitica).